A 255-amino-acid chain; its full sequence is tRNA (guanine-N(1)-)-methyltransferase (255 aa).

S-adenosyl-L-methionine-binding positions include glycine 113 and 133–138; that span reads IGDYVL.

The protein belongs to the RNA methyltransferase TrmD family. Homodimer.

The protein resides in the cytoplasm. The enzyme catalyses guanosine(37) in tRNA + S-adenosyl-L-methionine = N(1)-methylguanosine(37) in tRNA + S-adenosyl-L-homocysteine + H(+). Its function is as follows. Specifically methylates guanosine-37 in various tRNAs. The polypeptide is tRNA (guanine-N(1)-)-methyltransferase (Escherichia fergusonii (strain ATCC 35469 / DSM 13698 / CCUG 18766 / IAM 14443 / JCM 21226 / LMG 7866 / NBRC 102419 / NCTC 12128 / CDC 0568-73)).